The chain runs to 398 residues: Succinate--CoA ligase [ADP-forming] subunit beta (398 aa).

The region spanning 9-254 (KALLGEFGVP…ETEEDAKEIE (246 aa)) is the ATP-grasp domain. ATP-binding positions include Lys46, 53 to 55 (GRG), Glu109, Ser112, and Glu117. 2 residues coordinate Mg(2+): Asn209 and Asp223. Substrate is bound by residues Asn274 and 331–333 (GIM).

The protein belongs to the succinate/malate CoA ligase beta subunit family. In terms of assembly, heterotetramer of two alpha and two beta subunits. The cofactor is Mg(2+).

It carries out the reaction succinate + ATP + CoA = succinyl-CoA + ADP + phosphate. It catalyses the reaction GTP + succinate + CoA = succinyl-CoA + GDP + phosphate. The protein operates within carbohydrate metabolism; tricarboxylic acid cycle; succinate from succinyl-CoA (ligase route): step 1/1. Its function is as follows. Succinyl-CoA synthetase functions in the citric acid cycle (TCA), coupling the hydrolysis of succinyl-CoA to the synthesis of either ATP or GTP and thus represents the only step of substrate-level phosphorylation in the TCA. The beta subunit provides nucleotide specificity of the enzyme and binds the substrate succinate, while the binding sites for coenzyme A and phosphate are found in the alpha subunit. In Bradyrhizobium diazoefficiens (strain JCM 10833 / BCRC 13528 / IAM 13628 / NBRC 14792 / USDA 110), this protein is Succinate--CoA ligase [ADP-forming] subunit beta.